A 152-amino-acid polypeptide reads, in one-letter code: Deoxyuridine 5'-triphosphate nucleotidohydrolase (152 aa).

Substrate contacts are provided by residues 71-73 (RSG), N84, 88-90 (LID), and M98.

This sequence belongs to the dUTPase family. Mg(2+) serves as cofactor.

The enzyme catalyses dUTP + H2O = dUMP + diphosphate + H(+). It functions in the pathway pyrimidine metabolism; dUMP biosynthesis; dUMP from dCTP (dUTP route): step 2/2. Functionally, this enzyme is involved in nucleotide metabolism: it produces dUMP, the immediate precursor of thymidine nucleotides and it decreases the intracellular concentration of dUTP so that uracil cannot be incorporated into DNA. This Citrobacter koseri (strain ATCC BAA-895 / CDC 4225-83 / SGSC4696) protein is Deoxyuridine 5'-triphosphate nucleotidohydrolase.